The chain runs to 337 residues: Ornithine carbamoyltransferase (337 aa).

Residues 57-60 (STRT), Gln-84, Arg-108, and 135-138 (HPTQ) each bind carbamoyl phosphate. L-ornithine-binding positions include Asn-167, Asp-231, and 235-236 (SM). Carbamoyl phosphate is bound by residues 272 to 273 (CL) and Arg-317.

The protein belongs to the aspartate/ornithine carbamoyltransferase superfamily. OTCase family.

It localises to the cytoplasm. It carries out the reaction carbamoyl phosphate + L-ornithine = L-citrulline + phosphate + H(+). Its pathway is amino-acid degradation; L-arginine degradation via ADI pathway; carbamoyl phosphate from L-arginine: step 2/2. Reversibly catalyzes the transfer of the carbamoyl group from carbamoyl phosphate (CP) to the N(epsilon) atom of ornithine (ORN) to produce L-citrulline. The protein is Ornithine carbamoyltransferase of Streptococcus uberis (strain ATCC BAA-854 / 0140J).